A 140-amino-acid polypeptide reads, in one-letter code: Nucleoside diphosphate kinase (140 aa).

The ATP site is built by lysine 11, phenylalanine 59, arginine 87, threonine 93, arginine 104, and asparagine 114. Histidine 117 acts as the Pros-phosphohistidine intermediate in catalysis.

The protein belongs to the NDK family. As to quaternary structure, homotetramer. Mg(2+) serves as cofactor.

The protein resides in the cytoplasm. The catalysed reaction is a 2'-deoxyribonucleoside 5'-diphosphate + ATP = a 2'-deoxyribonucleoside 5'-triphosphate + ADP. It carries out the reaction a ribonucleoside 5'-diphosphate + ATP = a ribonucleoside 5'-triphosphate + ADP. Major role in the synthesis of nucleoside triphosphates other than ATP. The ATP gamma phosphate is transferred to the NDP beta phosphate via a ping-pong mechanism, using a phosphorylated active-site intermediate. This is Nucleoside diphosphate kinase from Rhodopseudomonas palustris (strain BisB18).